A 327-amino-acid chain; its full sequence is PDZ and LIM domain protein 1 (327 aa).

Thr2 carries the N-acetylthreonine modification. The 83-residue stretch at 3–85 (TQQIVLQGPG…NMTLTVSRSE (83 aa)) folds into the PDZ domain. Phosphoserine is present on residues Ser90 and Ser130. A Phosphotyrosine modification is found at Tyr142. A disordered region spans residues 161–184 (VESKTSASGEEANSRPVVQPHPSG). The LIM zinc-binding domain occupies 256-315 (PICDKCGTGIVGVFVKLRDHHRHPECYVCTDCGINLKQKGHFFVEDQIYCEKHARERVTP). The Zn(2+) site is built by Cys258, Cys261, His278, Cys281, Cys284, Cys287, Cys305, and His308. The residue at position 314 (Thr314) is a Phosphothreonine. Tyr319 is subject to Phosphotyrosine.

As to quaternary structure, interacts with ACTN1, ACTN2 and ACTN4. Interacts with PDLIM4. As to expression, expressed in heart, lung, spleen, testis and skeletal muscle.

The protein resides in the cytoplasm. It localises to the cytoskeleton. It is found in the myofibril. The protein localises to the sarcomere. Its subcellular location is the z line. In terms of biological role, cytoskeletal protein that may act as an adapter that brings other proteins (like kinases) to the cytoskeleton. Involved in assembly, disassembly and directioning of stress fibers in fibroblasts. Required for the localization of ACTN1 and PALLD to stress fibers. Required for cell migration and in maintaining cell polarity of fibroblasts. This Mus musculus (Mouse) protein is PDZ and LIM domain protein 1 (Pdlim1).